Reading from the N-terminus, the 394-residue chain is Queuine tRNA-ribosyltransferase (394 aa).

Aspartate 99 (proton acceptor) is an active-site residue. Substrate-binding positions include 99-103 (DSGGF), aspartate 153, glutamine 195, and glycine 222. The segment at 253-259 (GVGHPED) is RNA binding. Aspartate 272 serves as the catalytic Nucleophile. An RNA binding; important for wobble base 34 recognition region spans residues 277–281 (TRTGR). Zn(2+) is bound by residues cysteine 310, cysteine 312, cysteine 315, and histidine 341.

Belongs to the queuine tRNA-ribosyltransferase family. In terms of assembly, homodimer. Within each dimer, one monomer is responsible for RNA recognition and catalysis, while the other monomer binds to the replacement base PreQ1. It depends on Zn(2+) as a cofactor.

It carries out the reaction 7-aminomethyl-7-carbaguanine + guanosine(34) in tRNA = 7-aminomethyl-7-carbaguanosine(34) in tRNA + guanine. It participates in tRNA modification; tRNA-queuosine biosynthesis. Catalyzes the base-exchange of a guanine (G) residue with the queuine precursor 7-aminomethyl-7-deazaguanine (PreQ1) at position 34 (anticodon wobble position) in tRNAs with GU(N) anticodons (tRNA-Asp, -Asn, -His and -Tyr). Catalysis occurs through a double-displacement mechanism. The nucleophile active site attacks the C1' of nucleotide 34 to detach the guanine base from the RNA, forming a covalent enzyme-RNA intermediate. The proton acceptor active site deprotonates the incoming PreQ1, allowing a nucleophilic attack on the C1' of the ribose to form the product. After dissociation, two additional enzymatic reactions on the tRNA convert PreQ1 to queuine (Q), resulting in the hypermodified nucleoside queuosine (7-(((4,5-cis-dihydroxy-2-cyclopenten-1-yl)amino)methyl)-7-deazaguanosine). The chain is Queuine tRNA-ribosyltransferase from Deinococcus radiodurans (strain ATCC 13939 / DSM 20539 / JCM 16871 / CCUG 27074 / LMG 4051 / NBRC 15346 / NCIMB 9279 / VKM B-1422 / R1).